The sequence spans 491 residues: Tryptophan 5-hydroxylase 2 (491 aa).

At S19 the chain carries Phosphoserine. The interval N33–G63 is disordered. The ACT domain occupies A66–N141. Positions 319, 324, and 364 each coordinate Fe cation.

Belongs to the biopterin-dependent aromatic amino acid hydroxylase family. In terms of assembly, interacts with DNAJC12. Fe(2+) serves as cofactor.

It catalyses the reaction (6R)-L-erythro-5,6,7,8-tetrahydrobiopterin + L-tryptophan + O2 = 5-hydroxy-L-tryptophan + (4aS,6R)-4a-hydroxy-L-erythro-5,6,7,8-tetrahydrobiopterin. Its pathway is aromatic compound metabolism; serotonin biosynthesis; serotonin from L-tryptophan: step 1/2. The polypeptide is Tryptophan 5-hydroxylase 2 (TPH2) (Equus caballus (Horse)).